Here is a 206-residue protein sequence, read N- to C-terminus: MTDLIAKTAIDRRLAEIISPVIEDLGFELVRIRLQGGKTATLQIMADRPEGGINVDDCADISTAVSAILDVEDPLEDAYHLEVSSPGIDRPLTRLKDFETFEGYEARLETNQPIDGRKRFKGVLAGVEKGEGGDEVLLNIEEGGETQTIGLNFDWLSDAKLVLTDELIAEMLRQKKDAGVQIENLDEAAFDEIETEAGEDNAAAKE.

This sequence belongs to the RimP family.

It localises to the cytoplasm. Functionally, required for maturation of 30S ribosomal subunits. This chain is Ribosome maturation factor RimP, found in Paracoccus denitrificans (strain Pd 1222).